The sequence spans 326 residues: Putative ribose-phosphate pyrophosphokinase 2 (326 aa).

Residues 43–45 and 102–103 contribute to the ATP site; these read DGE and RQ. A Mg(2+)-binding site is contributed by His-136. D-ribose 5-phosphate-binding positions include Asp-225 and 229–233; that span reads NTGKT.

This sequence belongs to the ribose-phosphate pyrophosphokinase family. Class I subfamily. Homohexamer. Mg(2+) is required as a cofactor.

The protein resides in the cytoplasm. It carries out the reaction D-ribose 5-phosphate + ATP = 5-phospho-alpha-D-ribose 1-diphosphate + AMP + H(+). The protein operates within metabolic intermediate biosynthesis; 5-phospho-alpha-D-ribose 1-diphosphate biosynthesis; 5-phospho-alpha-D-ribose 1-diphosphate from D-ribose 5-phosphate (route I): step 1/1. Functionally, involved in the biosynthesis of the central metabolite phospho-alpha-D-ribosyl-1-pyrophosphate (PRPP) via the transfer of pyrophosphoryl group from ATP to 1-hydroxyl of ribose-5-phosphate (Rib-5-P). The polypeptide is Putative ribose-phosphate pyrophosphokinase 2 (Streptococcus pyogenes serotype M3 (strain SSI-1)).